We begin with the raw amino-acid sequence, 329 residues long: GMP reductase (329 aa).

The active-site Thioimidate intermediate is cysteine 178. 207-230 lines the NADP(+) pocket; sequence IIADGGIRNNGDIAKSIRFGATMC.

This sequence belongs to the IMPDH/GMPR family. GuaC type 2 subfamily.

The enzyme catalyses IMP + NH4(+) + NADP(+) = GMP + NADPH + 2 H(+). Functionally, catalyzes the irreversible NADPH-dependent deamination of GMP to IMP. It functions in the conversion of nucleobase, nucleoside and nucleotide derivatives of G to A nucleotides, and in maintaining the intracellular balance of A and G nucleotides. The polypeptide is GMP reductase (Lacticaseibacillus paracasei (strain ATCC 334 / BCRC 17002 / CCUG 31169 / CIP 107868 / KCTC 3260 / NRRL B-441) (Lactobacillus paracasei)).